Reading from the N-terminus, the 403-residue chain is Soluble calcium-activated nucleotidase 1 (403 aa).

Topologically, residues 1-44 (MPIQPFDQREWNEPMHSLRISVGGLPVLASMTKATDPRFRPRWR) are cytoplasmic. The helical; Signal-anchor for type II membrane protein transmembrane segment at 45–61 (VILTSFVGAALLWLLYS) threads the bilayer. The Lumenal segment spans residues 62 to 403 (HHQGPVPGRP…TVKYEGIEFI (342 aa)). Asn90 carries N-linked (GlcNAc...) asparagine glycosylation. Ca(2+)-binding residues include Ser170, Asp171, Glu217, Glu286, Ser347, and Glu398.

It belongs to the apyrase family. Monomer. Homodimer; dimerization is Ca(2+)-dependent. Ca(2+) is required as a cofactor.

It is found in the endoplasmic reticulum membrane. The protein localises to the golgi apparatus. The protein resides in the golgi stack membrane. The enzyme catalyses a ribonucleoside 5'-diphosphate + H2O = a ribonucleoside 5'-phosphate + phosphate + H(+). Calcium-dependent nucleotidase with a preference for UDP. The order of activity with different substrates is UDP &gt; GDP &gt; IDP &gt;&gt; UTP &gt; CDP = GTP = ITP. Has very low activity towards ADP and even lower activity towards ATP. Does not hydrolyze AMP and GMP. Involved in proteoglycan synthesis. The protein is Soluble calcium-activated nucleotidase 1 (Cant1) of Mus musculus (Mouse).